Consider the following 303-residue polypeptide: Coenzyme PQQ synthesis protein B (303 aa).

The protein belongs to the PqqB family.

It functions in the pathway cofactor biosynthesis; pyrroloquinoline quinone biosynthesis. In terms of biological role, may be involved in the transport of PQQ or its precursor to the periplasm. The sequence is that of Coenzyme PQQ synthesis protein B from Pseudomonas syringae pv. syringae (strain B728a).